Here is a 62-residue protein sequence, read N- to C-terminus: Photosystem II reaction center X protein (62 aa).

The helical transmembrane segment at isoleucine 26–phenylalanine 46 threads the bilayer.

The protein belongs to the PsbX family. Type 2 subfamily. As to quaternary structure, PSII consists of a core antenna complex that captures photons, and an electron transfer chain that converts photonic excitation into a charge separation. PSII forms dimeric complexes.

It is found in the cellular thylakoid membrane. Involved in the binding and/or turnover of quinones at the Q(B) site of Photosystem II. The polypeptide is Photosystem II reaction center X protein (Prochlorococcus marinus (strain MIT 9515)).